The following is a 353-amino-acid chain: Terpene synthase 3 (353 aa).

Aspartate 118, asparagine 261, and glutamate 269 together coordinate Mg(2+). Positions aspartate 118–glutamate 122 match the D(D/E)XX(D/E) motif motif. The NSE motif motif lies at asparagine 261 to glutamate 269. Residues tryptophan 342–tyrosine 349 carry the WxxxxxRY motif motif.

The protein belongs to the terpene synthase family. It depends on Mg(2+) as a cofactor.

Functionally, terpene synthase that may be involved in the production of volatile terpenoids. Does not show detectable terpene products with either farnesyl diphosphate (FPP) or geranyl diphosphate (GPP). P.polycephalum has a unique biology and these volatile terpenoids could function in internal communication of P.polycephalum, to mark the territory that have been explored, or they may be involved in chemotaxis. This Physarum polycephalum (Slime mold) protein is Terpene synthase 3.